We begin with the raw amino-acid sequence, 251 residues long: Ubiquinone/menaquinone biosynthesis C-methyltransferase UbiE (251 aa).

Thr74, Asp92, and Ser132 together coordinate S-adenosyl-L-methionine.

This sequence belongs to the class I-like SAM-binding methyltransferase superfamily. MenG/UbiE family.

It catalyses the reaction a 2-demethylmenaquinol + S-adenosyl-L-methionine = a menaquinol + S-adenosyl-L-homocysteine + H(+). The catalysed reaction is a 2-methoxy-6-(all-trans-polyprenyl)benzene-1,4-diol + S-adenosyl-L-methionine = a 5-methoxy-2-methyl-3-(all-trans-polyprenyl)benzene-1,4-diol + S-adenosyl-L-homocysteine + H(+). It participates in quinol/quinone metabolism; menaquinone biosynthesis; menaquinol from 1,4-dihydroxy-2-naphthoate: step 2/2. It functions in the pathway cofactor biosynthesis; ubiquinone biosynthesis. Functionally, methyltransferase required for the conversion of demethylmenaquinol (DMKH2) to menaquinol (MKH2) and the conversion of 2-polyprenyl-6-methoxy-1,4-benzoquinol (DDMQH2) to 2-polyprenyl-3-methyl-6-methoxy-1,4-benzoquinol (DMQH2). This chain is Ubiquinone/menaquinone biosynthesis C-methyltransferase UbiE, found in Rubrivivax gelatinosus (strain NBRC 100245 / IL144).